The chain runs to 270 residues: Formamidopyrimidine-DNA glycosylase (270 aa).

The active-site Schiff-base intermediate with DNA is proline 2. Glutamate 3 serves as the catalytic Proton donor. Lysine 58 serves as the catalytic Proton donor; for beta-elimination activity. Histidine 91, arginine 110, and arginine 151 together coordinate DNA. The FPG-type zinc finger occupies 236 to 270 (FVYGRGGEFCKVCGSTLREIRLGQRASVYCPRCQR). The active-site Proton donor; for delta-elimination activity is the arginine 260.

The protein belongs to the FPG family. As to quaternary structure, monomer. It depends on Zn(2+) as a cofactor.

It carries out the reaction Hydrolysis of DNA containing ring-opened 7-methylguanine residues, releasing 2,6-diamino-4-hydroxy-5-(N-methyl)formamidopyrimidine.. It catalyses the reaction 2'-deoxyribonucleotide-(2'-deoxyribose 5'-phosphate)-2'-deoxyribonucleotide-DNA = a 3'-end 2'-deoxyribonucleotide-(2,3-dehydro-2,3-deoxyribose 5'-phosphate)-DNA + a 5'-end 5'-phospho-2'-deoxyribonucleoside-DNA + H(+). In terms of biological role, involved in base excision repair of DNA damaged by oxidation or by mutagenic agents. Acts as a DNA glycosylase that recognizes and removes damaged bases. Has a preference for oxidized purines, such as 7,8-dihydro-8-oxoguanine (8-oxoG). Has AP (apurinic/apyrimidinic) lyase activity and introduces nicks in the DNA strand. Cleaves the DNA backbone by beta-delta elimination to generate a single-strand break at the site of the removed base with both 3'- and 5'-phosphates. In Pseudomonas aeruginosa (strain LESB58), this protein is Formamidopyrimidine-DNA glycosylase.